Consider the following 452-residue polypeptide: Selenide, water dikinase 2 (452 aa).

An N-acetylalanine modification is found at A2. The residue at position 49 (S49) is a Phosphoserine. The active site involves U63. Position 63 (U63) is a non-standard amino acid, selenocysteine. Residue K66 participates in ATP binding. A disordered region spans residues 86–111 (PPLTSGLVGGQEETVQEGGLSTRPGP). Residues 95–105 (GQEETVQEGGL) show a composition bias toward low complexity. ATP-binding positions include 121-123 (GMD), D141, D164, and 215-218 (GGQT). Mg(2+) is bound at residue D123. D164 is a Mg(2+) binding site. D319 serves as a coordination point for Mg(2+).

Belongs to the selenophosphate synthase 1 family. Class I subfamily. Homodimer. The cofactor is Mg(2+). Post-translationally, truncated SEPHS2 proteins produced by failed UGA/Sec decoding are ubiquitinated by the CRL2(KLHDC3) complex, which recognizes the glycine (Gly) at the C-terminus of truncated SEPHS2 proteins.

The catalysed reaction is hydrogenselenide + ATP + H2O = selenophosphate + AMP + phosphate + 2 H(+). Its function is as follows. Synthesizes selenophosphate from selenide and ATP. In Mus musculus (Mouse), this protein is Selenide, water dikinase 2 (Sephs2).